Here is a 304-residue protein sequence, read N- to C-terminus: UDP-3-O-acyl-N-acetylglucosamine deacetylase (304 aa).

H78, H237, and D241 together coordinate Zn(2+). Catalysis depends on H264, which acts as the Proton donor.

It belongs to the LpxC family. Zn(2+) serves as cofactor.

The catalysed reaction is a UDP-3-O-[(3R)-3-hydroxyacyl]-N-acetyl-alpha-D-glucosamine + H2O = a UDP-3-O-[(3R)-3-hydroxyacyl]-alpha-D-glucosamine + acetate. Its pathway is glycolipid biosynthesis; lipid IV(A) biosynthesis; lipid IV(A) from (3R)-3-hydroxytetradecanoyl-[acyl-carrier-protein] and UDP-N-acetyl-alpha-D-glucosamine: step 2/6. In terms of biological role, catalyzes the hydrolysis of UDP-3-O-myristoyl-N-acetylglucosamine to form UDP-3-O-myristoylglucosamine and acetate, the committed step in lipid A biosynthesis. The sequence is that of UDP-3-O-acyl-N-acetylglucosamine deacetylase from Legionella pneumophila (strain Lens).